Reading from the N-terminus, the 377-residue chain is Chaperone protein DnaJ (377 aa).

Residues 5-70 (DYYQVLGVSR…KKRSAYDQLG (66 aa)) enclose the J domain. The CR-type zinc-finger motif lies at 138-216 (GVTKIISFKT…CYGEGRYINT (79 aa)). Positions 151, 154, 168, 171, 190, 193, 204, and 207 each coordinate Zn(2+). CXXCXGXG motif repeat units lie at residues 151–158 (CEACTGKG), 168–175 (CPTCRGSG), 190–197 (CQTCRGAG), and 204–211 (CTKCYGEG).

This sequence belongs to the DnaJ family. In terms of assembly, homodimer. Zn(2+) is required as a cofactor.

Its subcellular location is the cytoplasm. In terms of biological role, participates actively in the response to hyperosmotic and heat shock by preventing the aggregation of stress-denatured proteins and by disaggregating proteins, also in an autonomous, DnaK-independent fashion. Unfolded proteins bind initially to DnaJ; upon interaction with the DnaJ-bound protein, DnaK hydrolyzes its bound ATP, resulting in the formation of a stable complex. GrpE releases ADP from DnaK; ATP binding to DnaK triggers the release of the substrate protein, thus completing the reaction cycle. Several rounds of ATP-dependent interactions between DnaJ, DnaK and GrpE are required for fully efficient folding. Also involved, together with DnaK and GrpE, in the DNA replication of plasmids through activation of initiation proteins. The chain is Chaperone protein DnaJ from Orientia tsutsugamushi (strain Ikeda) (Rickettsia tsutsugamushi).